The following is a 37-amino-acid chain: Large ribosomal subunit protein bL36 (37 aa).

The protein belongs to the bacterial ribosomal protein bL36 family.

The polypeptide is Large ribosomal subunit protein bL36 (Synechococcus elongatus (strain ATCC 33912 / PCC 7942 / FACHB-805) (Anacystis nidulans R2)).